The primary structure comprises 300 residues: Dihydroorotate dehydrogenase B (NAD(+)), catalytic subunit (300 aa).

FMN is bound by residues Ser-21 and 45–46 (KG). Substrate contacts are provided by residues Lys-45 and 69–73 (NSIGL). FMN contacts are provided by Asn-99 and Asn-126. Asn-126 serves as a coordination point for substrate. Residue Cys-129 is the Nucleophile of the active site. FMN contacts are provided by Lys-164 and Val-190. 191-192 (NT) is a substrate binding site. Residues Gly-216, 242–243 (GG), and 264–265 (GT) each bind FMN.

It belongs to the dihydroorotate dehydrogenase family. Type 1 subfamily. Heterotetramer of 2 PyrK and 2 PyrD type B subunits. FMN is required as a cofactor.

Its subcellular location is the cytoplasm. It carries out the reaction (S)-dihydroorotate + NAD(+) = orotate + NADH + H(+). It participates in pyrimidine metabolism; UMP biosynthesis via de novo pathway; orotate from (S)-dihydroorotate (NAD(+) route): step 1/1. Its function is as follows. Catalyzes the conversion of dihydroorotate to orotate with NAD(+) as electron acceptor. In Petrotoga mobilis (strain DSM 10674 / SJ95), this protein is Dihydroorotate dehydrogenase B (NAD(+)), catalytic subunit (pyrD).